The sequence spans 289 residues: Agroclavine dehydrogenase (289 aa).

It belongs to the fgaFS/easG family. As to quaternary structure, monomer.

The catalysed reaction is agroclavine + NADP(+) = didehydroagroclavine + NADPH + H(+). The protein operates within alkaloid biosynthesis; ergot alkaloid biosynthesis. Agroclavine dehydrogenase; part of the gene cluster that mediates the biosynthesis of fungal ergot alkaloid ergovaline, the predominant ergopeptine product in E.festucae var. lolii. DmaW catalyzes the first step of ergot alkaloid biosynthesis by condensing dimethylallyl diphosphate (DMAP) and tryptophan to form 4-dimethylallyl-L-tryptophan. The second step is catalyzed by the methyltransferase easF that methylates 4-dimethylallyl-L-tryptophan in the presence of S-adenosyl-L-methionine, resulting in the formation of 4-dimethylallyl-L-abrine. The catalase easC and the FAD-dependent oxidoreductase easE then transform 4-dimethylallyl-L-abrine to chanoclavine-I which is further oxidized by easD in the presence of NAD(+), resulting in the formation of chanoclavine-I aldehyde. Agroclavine dehydrogenase easG then mediates the conversion of chanoclavine-I aldehyde to agroclavine via a non-enzymatic adduct reaction: the substrate is an iminium intermediate that is formed spontaneously from chanoclavine-I aldehyde in the presence of glutathione. Further conversion of agroclavine to paspalic acid is a two-step process involving oxidation of agroclavine to elymoclavine and of elymoclavine to paspalic acid, the second step being performed by the elymoclavine oxidase cloA. However, cloA does not encode a functional enzyme indicating that C.fusiformis terminates its ergot alkaloid pathway at elymoclavine. The chain is Agroclavine dehydrogenase from Claviceps fusiformis (Ergot fungus).